Consider the following 819-residue polypeptide: DNA topoisomerase 4 subunit A (819 aa).

Residues 30-496 (LPDIRDGLKP…QIIEIDTASL (467 aa)) enclose the Topo IIA-type catalytic domain. Tyr-118 acts as the O-(5'-phospho-DNA)-tyrosine intermediate in catalysis.

Belongs to the type II topoisomerase GyrA/ParC subunit family. ParC type 2 subfamily. In terms of assembly, heterotetramer composed of ParC and ParE.

It is found in the cell membrane. The catalysed reaction is ATP-dependent breakage, passage and rejoining of double-stranded DNA.. Its function is as follows. Topoisomerase IV is essential for chromosome segregation. It relaxes supercoiled DNA. Performs the decatenation events required during the replication of a circular DNA molecule. In Streptococcus pyogenes serotype M18 (strain MGAS8232), this protein is DNA topoisomerase 4 subunit A.